Here is a 200-residue protein sequence, read N- to C-terminus: uncharacterized protein (200 aa).

The interval 149–200 (APDPGGSVATEEVLRSDDRDSHTQDSASEWPEGNDSVGSAAMRIDLSRIGGT) is disordered. The span at 160-171 (EVLRSDDRDSHT) shows a compositional bias: basic and acidic residues.

This sequence to A.tumefaciens Ti plasmid conjugal transfer region I ORFR2 and ORFR3.

This is an uncharacterized protein from Sinorhizobium fredii (strain NBRC 101917 / NGR234).